Consider the following 322-residue polypeptide: L-asparaginase (322 aa).

In terms of domain architecture, Asparaginase/glutaminase spans 3-322; the sequence is KKVALITTGG…KEGIKDKFCY (320 aa). Threonine 13 serves as the catalytic O-isoaspartyl threonine intermediate. Substrate is bound by residues serine 56 and 89 to 90; that span reads TD.

This sequence belongs to the asparaginase 1 family. Homotetramer.

The protein resides in the cytoplasm. It catalyses the reaction L-asparagine + H2O = L-aspartate + NH4(+). This is L-asparaginase (ansA) from Bacillus licheniformis.